We begin with the raw amino-acid sequence, 241 residues long: Serine protease 58 (241 aa).

Positions M1–A17 are cleaved as a signal peptide. Residues F18–Q239 enclose the Peptidase S1 domain. The cysteines at positions 41 and 57 are disulfide-linked. Catalysis depends on charge relay system residues H56 and D101. Intrachain disulfides connect C133–C201, C165–C180, and C191–C215. N-linked (GlcNAc...) asparagine glycosylation is found at N156 and N173. The Charge relay system role is filled by S195.

It belongs to the peptidase S1 family.

Its subcellular location is the secreted. The enzyme catalyses Preferential cleavage: Arg-|-Xaa, Lys-|-Xaa.. This Homo sapiens (Human) protein is Serine protease 58 (PRSS58).